The sequence spans 83 residues: Small ribosomal subunit protein uS17c (83 aa).

Belongs to the universal ribosomal protein uS17 family. Part of the 30S ribosomal subunit.

Its subcellular location is the plastid. The protein resides in the chloroplast. Functionally, one of the primary rRNA binding proteins, it binds specifically to the 5'-end of 16S ribosomal RNA. The chain is Small ribosomal subunit protein uS17c (rps17) from Pyropia yezoensis (Susabi-nori).